The chain runs to 663 residues: Transcriptional repressor CTCFL (663 aa).

Basic and acidic residues predominate over residues 24–51 (EKGLKEEEKDGVCREKDHRSPSELEAER). Disordered stretches follow at residues 24-55 (EKGLKEEEKDGVCREKDHRSPSELEAERTSGA) and 221-250 (NSNVEEQEDQPTAGQADAEKAKSTKNQRKT). C2H2-type zinc fingers lie at residues 257 to 279 (FHCDVCMFTSSRMSSFNRHMKTH), 285 to 307 (HLCHLCLKTFRTVTLLRNHVNTH), 313 to 336 (YKCNDCNMAFVTSGELVRHRRYKH), 342 to 364 (FKCSMCKYASVEASKLKRHVRSH), 370 to 392 (FQCCQCSYASRDTYKLKRHMRTH), 398 to 421 (YECHICHTRFTQSGTMKIHILQKH), 428 to 451 (YQCPHCATIIARKSDLRVHMRNLH), 458 to 480 (LKCRYCSAVFHERYALIQHQKTH), 486 to 508 (FKCKHCSYACKQERHMTAHIRTH), and 514 to 537 (FTCLSCNKCFRQKQLLNAHFRKYH). A C2H2-type 11; atypical zinc finger spans residues 546–568 (YKCSKCGKGFSRWINLHRHSEKC). Residues 569 to 630 (GSGEAKSAAS…STTKGEQFPG (62 aa)) are disordered. Residues 580-590 (KGRRTRKRKQT) show a composition bias toward basic residues. Residues 594–607 (EATKGQKEAAKGWK) are compositionally biased toward basic and acidic residues. Positions 608 to 620 (EAANGDEAAAEEA) are enriched in low complexity.

It belongs to the CTCF zinc-finger protein family. In terms of assembly, interacts with histones, PRMT7 and SETD1A. Interacts (via N-terminus) with BAG6/BAT3. Testis specific. Specifically expressed in primary spermatocytes.

Its subcellular location is the cytoplasm. The protein resides in the nucleus. Its function is as follows. Testis-specific DNA binding protein responsible for insulator function, nuclear architecture and transcriptional control, which probably acts by recruiting epigenetic chromatin modifiers. Plays a key role in gene imprinting in male germline, by participating in the establishment of differential methylation at the IGF2/H19 imprinted control region (ICR). Directly binds the unmethylated H19 ICR and recruits the PRMT7 methyltransferase, leading to methylate histone H4 'Arg-3' to form H4R3sme2. This probably leads to recruit de novo DNA methyltransferases at these sites. Seems to act as tumor suppressor. In association with DNMT1 and DNMT3B, involved in activation of BAG1 gene expression by binding to its promoter. Required for dimethylation of H3 lysine 4 (H3K4me2) of MYC and BRCA1 promoters. The protein is Transcriptional repressor CTCFL (CTCFL) of Homo sapiens (Human).